The sequence spans 290 residues: Phosphatidylglycerol--prolipoprotein diacylglyceryl transferase (290 aa).

The next 7 membrane-spanning stretches (helical) occupy residues 21–41, 60–80, 96–116, 124–144, 198–218, 225–245, and 260–280; these read VALHWYGLMYLVGFIFAMWLA, LLYAGFLGVFLGGRIGYVLFY, WDGGMSFHGGLIGVILVMVIF, FFQVADFMAPLIPFGLGAGRL, SQLYELALEGVVLFIILNLFI, GSVSGLFLIGYGAFRIIVEFF, and ISMGQILSIPMIVAGIIMMIW. An a 1,2-diacyl-sn-glycero-3-phospho-(1'-sn-glycerol)-binding site is contributed by Arg143.

Belongs to the Lgt family.

It is found in the cell inner membrane. It carries out the reaction L-cysteinyl-[prolipoprotein] + a 1,2-diacyl-sn-glycero-3-phospho-(1'-sn-glycerol) = an S-1,2-diacyl-sn-glyceryl-L-cysteinyl-[prolipoprotein] + sn-glycerol 1-phosphate + H(+). Its pathway is protein modification; lipoprotein biosynthesis (diacylglyceryl transfer). Catalyzes the transfer of the diacylglyceryl group from phosphatidylglycerol to the sulfhydryl group of the N-terminal cysteine of a prolipoprotein, the first step in the formation of mature lipoproteins. The polypeptide is Phosphatidylglycerol--prolipoprotein diacylglyceryl transferase (Enterobacter sp. (strain 638)).